Here is a 494-residue protein sequence, read N- to C-terminus: Guanosine-5'-triphosphate,3'-diphosphate pyrophosphatase (494 aa).

It belongs to the GppA/Ppx family. GppA subfamily.

It catalyses the reaction guanosine 3'-diphosphate 5'-triphosphate + H2O = guanosine 3',5'-bis(diphosphate) + phosphate + H(+). The protein operates within purine metabolism; ppGpp biosynthesis; ppGpp from GTP: step 2/2. Its function is as follows. Catalyzes the conversion of pppGpp to ppGpp. Guanosine pentaphosphate (pppGpp) is a cytoplasmic signaling molecule which together with ppGpp controls the 'stringent response', an adaptive process that allows bacteria to respond to amino acid starvation, resulting in the coordinated regulation of numerous cellular activities. In Escherichia coli O139:H28 (strain E24377A / ETEC), this protein is Guanosine-5'-triphosphate,3'-diphosphate pyrophosphatase.